Reading from the N-terminus, the 944-residue chain is Bifunctional glutamine synthetase adenylyltransferase/adenylyl-removing enzyme (944 aa).

Positions 1 to 440 (MSANSVFQQL…IFTQLIGEDD (440 aa)) are adenylyl removase. Positions 448-944 (VSEFKRLWLL…LSSKQKWLDE (497 aa)) are adenylyl transferase.

Belongs to the GlnE family. It depends on Mg(2+) as a cofactor.

The catalysed reaction is [glutamine synthetase]-O(4)-(5'-adenylyl)-L-tyrosine + phosphate = [glutamine synthetase]-L-tyrosine + ADP. It carries out the reaction [glutamine synthetase]-L-tyrosine + ATP = [glutamine synthetase]-O(4)-(5'-adenylyl)-L-tyrosine + diphosphate. Its function is as follows. Involved in the regulation of glutamine synthetase GlnA, a key enzyme in the process to assimilate ammonia. When cellular nitrogen levels are high, the C-terminal adenylyl transferase (AT) inactivates GlnA by covalent transfer of an adenylyl group from ATP to specific tyrosine residue of GlnA, thus reducing its activity. Conversely, when nitrogen levels are low, the N-terminal adenylyl removase (AR) activates GlnA by removing the adenylyl group by phosphorolysis, increasing its activity. The regulatory region of GlnE binds the signal transduction protein PII (GlnB) which indicates the nitrogen status of the cell. This is Bifunctional glutamine synthetase adenylyltransferase/adenylyl-removing enzyme from Proteus mirabilis (strain HI4320).